Here is a 383-residue protein sequence, read N- to C-terminus: UDP-N-acetylglucosamine--N-acetylmuramyl-(pentapeptide) pyrophosphoryl-undecaprenol N-acetylglucosamine transferase (383 aa).

Residues 10–12 (TGG), N124, R165, S190, I245, and Q290 each bind UDP-N-acetyl-alpha-D-glucosamine. The tract at residues 364 to 383 (PFGQAREPGQKPARPPDLAS) is disordered.

This sequence belongs to the glycosyltransferase 28 family. MurG subfamily.

The protein resides in the cell inner membrane. It carries out the reaction di-trans,octa-cis-undecaprenyl diphospho-N-acetyl-alpha-D-muramoyl-L-alanyl-D-glutamyl-meso-2,6-diaminopimeloyl-D-alanyl-D-alanine + UDP-N-acetyl-alpha-D-glucosamine = di-trans,octa-cis-undecaprenyl diphospho-[N-acetyl-alpha-D-glucosaminyl-(1-&gt;4)]-N-acetyl-alpha-D-muramoyl-L-alanyl-D-glutamyl-meso-2,6-diaminopimeloyl-D-alanyl-D-alanine + UDP + H(+). The protein operates within cell wall biogenesis; peptidoglycan biosynthesis. Functionally, cell wall formation. Catalyzes the transfer of a GlcNAc subunit on undecaprenyl-pyrophosphoryl-MurNAc-pentapeptide (lipid intermediate I) to form undecaprenyl-pyrophosphoryl-MurNAc-(pentapeptide)GlcNAc (lipid intermediate II). The sequence is that of UDP-N-acetylglucosamine--N-acetylmuramyl-(pentapeptide) pyrophosphoryl-undecaprenol N-acetylglucosamine transferase from Anaeromyxobacter sp. (strain K).